The chain runs to 542 residues: Importin subunit alpha (542 aa).

At Met1 the chain carries N-acetylmethionine. A compositionally biased stretch (polar residues) spans 1 to 11 (MDNGTDSSTSK). Residues 1-65 (MDNGTDSSTS…RNFIPPTDGA (65 aa)) enclose the IBB domain. Residues 1 to 77 (MDNGTDSSTS…DEEDESSVSA (77 aa)) are disordered. Positions 27 to 53 (FSADELRRRRDTQQVELRKAKRDEALA) are enriched in basic and acidic residues. The stretch at 89–122 (LPQMTQQLNSDDMQEQLSATVKFRQILSREHRPP) is one ARM 1; truncated repeat. ARM repeat units follow at residues 123 to 162 (IDVV…ASGT), 163 to 204 (SAQT…AGDS), 205 to 251 (TDYR…PQPD), 252 to 288 (WSVV…SDGP), 289 to 330 (QEAI…VTGN), 331 to 372 (DLQT…TAGN), 373 to 417 (TEQI…GLQR), and 418 to 471 (PDII…LNIN). Positions 209–335 (DYVLQCNAME…IVTGNDLQTQ (127 aa)) are NLS binding site 1. An NLS binding site 2 region spans residues 419–505 (DIIRYLVSQG…KIYEKAYKII (87 aa)). The ARM 10; atypical repeat unit spans residues 472–508 (ENADFIEKAGGMEKIFNCQQNENDKIYEKAYKIIETY).

The protein belongs to the importin alpha family. As to quaternary structure, forms a complex with an importin beta subunit. In the nucleus, interacts with NUP2 which accelerate release of NLSs, NUP2 is subsequently displaced by CSE1:RanGTP which mediates re-export and recycling. Interacts with HEH2, SHE2, and STS1.

Its subcellular location is the cytoplasm. It is found in the perinuclear region. In terms of biological role, functions in nuclear protein import as an adapter protein for importin beta nuclear receptors. Binds specifically and directly to substrates containing either a simple or bipartite NLS motif. Promotes docking of import substrates to the nuclear envelope. Together with importin beta KAP95, mediates nuclear import of transcription factor GCN4. Together with tethering factor STS1, targets the proteasome to the nucleus. This Saccharomyces cerevisiae (strain ATCC 204508 / S288c) (Baker's yeast) protein is Importin subunit alpha (SRP1).